Here is a 1503-residue protein sequence, read N- to C-terminus: Translocase of chloroplast 159, chloroplastic (1503 aa).

The span at 1–24 (MDSKSVTPEPTNPFYASSGQSGKT) shows a compositional bias: polar residues. Residues 1 to 210 (MDSKSVTPEP…GGKVDVDDKS (210 aa)) are disordered. A helical membrane pass occupies residues 21–37 (SGKTYASVVAAAAAAAA). Ser71 is subject to Phosphoserine. Composition is skewed to basic and acidic residues over residues 85-98 (KVSD…KEDS) and 176-210 (SESK…DDKS). Phosphoserine occurs at positions 210, 281, and 288. Disordered regions lie at residues 298-338 (KFTS…DVEK) and 429-464 (VHNK…SEGD). The segment covering 447 to 456 (ESDKATEEGG) has biased composition (basic and acidic residues). Ser448, Ser461, Ser589, Ser609, Ser630, Ser632, and Ser665 each carry phosphoserine. Residues 610–633 (FGGKEVDQEPSGEGVTRVDGSESE) form a disordered region. A coiled-coil region spans residues 781–804 (EEEKQKLEKLQSLRVKFLRLLQRL). Residues 853–1087 (IFSLNILVLG…RPQEPLDHRK (235 aa)) enclose the AIG1-type G domain. Positions 862 to 869 (GKAGVGKS) are G1. Residues 865–870 (GVGKSA) and 884–889 (DAFGLS) each bind GTP. Ser869 is a Mg(2+) binding site. A homodimerization region spans residues 884 to 887 (DAFG). A G2 region spans residues 889–893 (STTSV). A G3 region spans residues 909–912 (DTPG). A homodimerization region spans residues 947–952 (RLDTQT). Positions 981-984 (THAA) are G4. GTP-binding positions include His982 and 1035–1036 (EN). A G5 region spans residues 1035–1037 (ENH). Residues 1175 to 1203 (DYRVKLLQKKQWREELKRMKEMKKNGKKL) adopt a coiled-coil conformation. The segment at 1203 to 1222 (LGESEFGYPGEEDDPENGAP) is disordered.

This sequence belongs to the TRAFAC class TrmE-Era-EngA-EngB-Septin-like GTPase superfamily. AIG1/Toc34/Toc159-like paraseptin GTPase family. TOC159 subfamily. Homodimer and heterodimer with TOC33. Part of the TOC core complex that includes 1 protein for the specific recognition of transit peptides surrounded by a ring composed of four proteins forming translocation channels, and four to five GTP-binding proteins providing energy. This core complex can interact with components of the TIC complex to form a larger import complex. Chloroplastic protein precursor such as prSS (precursor of the RuBisCO small subunit) interacts with these complexes. The TOC complex contains a specific subset of polar lipids such as digalactosyldiacylglyceride (DGDG), phosphatidylcholine (PC) and phosphatidylglycerol (PG). Interacts with SP1. The cofactor is Mg(2+). Phosphorylated by KOC1.

The protein resides in the plastid. It localises to the chloroplast outer membrane. It is found in the cytoplasm. Functionally, GTPase involved in protein precursor import into chloroplasts. Seems to recognize chloroplast-destined precursor proteins and regulate their presentation to the translocation channel through GTP hydrolysis. Required for chloroplast biogenesis. Probably specialized in the import of nuclear encoded photosynthetic preproteins from the cytoplasm to the chloroplast. In Arabidopsis thaliana (Mouse-ear cress), this protein is Translocase of chloroplast 159, chloroplastic.